Consider the following 446-residue polypeptide: Phosphoglucosamine mutase (446 aa).

Catalysis depends on Ser100, which acts as the Phosphoserine intermediate. Residues Ser100, Asp239, Asp241, and Asp243 each coordinate Mg(2+). Ser100 is modified (phosphoserine).

Belongs to the phosphohexose mutase family. Requires Mg(2+) as cofactor. In terms of processing, activated by phosphorylation.

The enzyme catalyses alpha-D-glucosamine 1-phosphate = D-glucosamine 6-phosphate. Functionally, catalyzes the conversion of glucosamine-6-phosphate to glucosamine-1-phosphate. This Oceanobacillus iheyensis (strain DSM 14371 / CIP 107618 / JCM 11309 / KCTC 3954 / HTE831) protein is Phosphoglucosamine mutase.